Reading from the N-terminus, the 350-residue chain is S-adenosylmethionine:tRNA ribosyltransferase-isomerase (350 aa).

It belongs to the QueA family. In terms of assembly, monomer.

The protein localises to the cytoplasm. The enzyme catalyses 7-aminomethyl-7-carbaguanosine(34) in tRNA + S-adenosyl-L-methionine = epoxyqueuosine(34) in tRNA + adenine + L-methionine + 2 H(+). It functions in the pathway tRNA modification; tRNA-queuosine biosynthesis. Transfers and isomerizes the ribose moiety from AdoMet to the 7-aminomethyl group of 7-deazaguanine (preQ1-tRNA) to give epoxyqueuosine (oQ-tRNA). This is S-adenosylmethionine:tRNA ribosyltransferase-isomerase from Vibrio vulnificus (strain CMCP6).